Here is a 224-residue protein sequence, read N- to C-terminus: Cytidylate kinase (224 aa).

An ATP-binding site is contributed by Gly11 to Thr19.

The protein belongs to the cytidylate kinase family. Type 1 subfamily.

The protein resides in the cytoplasm. The enzyme catalyses CMP + ATP = CDP + ADP. It carries out the reaction dCMP + ATP = dCDP + ADP. In Bacillus subtilis (strain 168), this protein is Cytidylate kinase (cmk).